We begin with the raw amino-acid sequence, 260 residues long: Large ribosomal subunit protein uL2y (260 aa).

Residues 227–248 form a disordered region; it reads RRDKSAGAKVGQIAARRTGRRR.

It belongs to the universal ribosomal protein uL2 family.

In Arabidopsis thaliana (Mouse-ear cress), this protein is Large ribosomal subunit protein uL2y (RPL8B).